We begin with the raw amino-acid sequence, 543 residues long: MYRSHNNNNNYHSRNDGSNGRINKPRDPKSQDKYVAYQQNIEQQLASQEKKQAYRRITDHGNNMGRWYIEKSLGLTNRSQQAIGTIRPESSYLIDLLPSLAYSSSFNLNRRNNKNNLAVLDLQTKFVHLSSNKVKHTINTVKWTPEGRRLLVASHSGEFTLWNGMTFNFETIMQAHESPILTMKYSNHDEWLLSGDQNGTVKYWQPNFNNVNNISAHANGVRDIAFSPNDSKFLTCGDDSAIKIWNFNNGKEERTLSGHHWEVKSADWHPNLGLIVSGSKDNLVKLWDPRSANCVSTLHGFKHTVNKTRFQPNGTARLLASVSRDRSCRIFDLRTMKDMLVIRDSETDLSCVAWHPIHASMVTTAAYNGSISNFLLDSYIPDSNESVPKRSNNNSNLSTNTNNTIDAVQKIPYAHEKAIHAVEYHPLGHLLCTAGSDKTARFWSRARPNDPMAWKDAVYTDCKAGAWYYSVNNNVNAVMEDPNAVKNEDDEIANNDDPLSNSGRRRGVGASASGGATGSVPGLRSRNETPNNGSYAIPGLRGF.

The segment covering 1–12 (MYRSHNNNNNYH) has biased composition (low complexity). Positions 1-31 (MYRSHNNNNNYHSRNDGSNGRINKPRDPKSQ) are disordered. WD repeat units lie at residues 133–172 (KVKHTINTVKWTPEGRRLLVASHSGEFTLWNGMTFNFETI), 175–215 (AHES…NNIS), 216–255 (AHANGVRDIAFSPNDSKFLTCGDDSAIKIWNFNNGKEERT), 258–297 (GHHWEVKSADWHPNLGLIVSGSKDNLVKLWDPRSANCVST), 300–341 (GFKH…DMLV), 344–384 (DSET…PDSN), and 414–453 (AHEKAIHAVEYHPLGHLLCTAGSDKTARFWSRARPNDPMA). A disordered region spans residues 486-543 (KNEDDEIANNDDPLSNSGRRRGVGASASGGATGSVPGLRSRNETPNNGSYAIPGLRGF).

It localises to the nucleus. Required for 3'-end cleavage and polyadenylation of pre-mRNAs. Also involved in chromosome segregation where it has a role in chromosome attachment to the mitotic spindle. This chain is Polyadenylation factor subunit 2 (PFS2), found in Candida albicans (strain SC5314 / ATCC MYA-2876) (Yeast).